The primary structure comprises 376 residues: MKVTSYRDAWVEVSLDALTYNVRQFKNHLQEKSRLMAVVKADGYGHGAVPIARRSLEAGAEYLGVAFIDEALQIREAGILAPILLLGFTPSYAVREAVRHDLTLTVYSTETLEAIKDAARSLDKKAKIHIKVDSGMSRIGLRSSEEVISLMTSLQTEEIEVEGIFTHFADADNDESDAYTYKQFETFQGIMEALENEGYSIPIKHCCNSAATIAFPDMHMDMVRVGISLYGLYPGQHLKEILSLQQVMSFKAKPVLIKDVPPHQPISYGLTYETKETSKIATLPIGYADGFSRLLSNVGHVTVHGTACPIVGRICMDQSMIDVSEVQTDVTKDDIVTIFGDENAGYIPLDVVAEQMQTIHYETVCLIGKRVPRHYV.

The active-site Proton acceptor; specific for D-alanine is K40. At K40 the chain carries N6-(pyridoxal phosphate)lysine. R138 contributes to the substrate binding site. Y268 serves as the catalytic Proton acceptor; specific for L-alanine. M316 is a binding site for substrate.

It belongs to the alanine racemase family. It depends on pyridoxal 5'-phosphate as a cofactor.

The catalysed reaction is L-alanine = D-alanine. It participates in amino-acid biosynthesis; D-alanine biosynthesis; D-alanine from L-alanine: step 1/1. Its function is as follows. Catalyzes the interconversion of L-alanine and D-alanine. May also act on other amino acids. The chain is Alanine racemase 1 (alr1) from Oceanobacillus iheyensis (strain DSM 14371 / CIP 107618 / JCM 11309 / KCTC 3954 / HTE831).